The sequence spans 693 residues: Glycine--tRNA ligase beta subunit (693 aa).

The protein belongs to the class-II aminoacyl-tRNA synthetase family. As to quaternary structure, tetramer of two alpha and two beta subunits.

It localises to the cytoplasm. It catalyses the reaction tRNA(Gly) + glycine + ATP = glycyl-tRNA(Gly) + AMP + diphosphate. This chain is Glycine--tRNA ligase beta subunit, found in Natranaerobius thermophilus (strain ATCC BAA-1301 / DSM 18059 / JW/NM-WN-LF).